The chain runs to 165 residues: Lipoprotein signal peptidase (165 aa).

Transmembrane regions (helical) follow at residues F9–Y29, K69–L89, and I98–F118. Active-site residues include D124 and D142. Residues W133 to I153 traverse the membrane as a helical segment.

Belongs to the peptidase A8 family.

The protein resides in the cell inner membrane. It carries out the reaction Release of signal peptides from bacterial membrane prolipoproteins. Hydrolyzes -Xaa-Yaa-Zaa-|-(S,diacylglyceryl)Cys-, in which Xaa is hydrophobic (preferably Leu), and Yaa (Ala or Ser) and Zaa (Gly or Ala) have small, neutral side chains.. Its pathway is protein modification; lipoprotein biosynthesis (signal peptide cleavage). In terms of biological role, this protein specifically catalyzes the removal of signal peptides from prolipoproteins. This Chlamydia abortus (strain DSM 27085 / S26/3) (Chlamydophila abortus) protein is Lipoprotein signal peptidase.